We begin with the raw amino-acid sequence, 981 residues long: Polyhomeotic-like protein 3 (981 aa).

Over residues 1 to 28 (MDSEPSSGTSVSTTASSTTTTTITTSSS) the composition is skewed to low complexity. Disordered regions lie at residues 1-33 (MDSE…MQQP), 102-127 (LSSG…TSIL), 224-280 (LSSS…TAVT), and 307-407 (QIPL…SQSP). Residues 224-255 (LSSSQNGSPKSAGQTQSLTICHNKTTVTSSKI) show a composition bias toward polar residues. 4 positions are modified to phosphoserine: S231, S261, S269, and S312. Residues 256–266 (SQRDPSPESKK) are compositionally biased toward basic and acidic residues. Residues 321 to 340 (QLLLQQQQQQIQPITLQSPS) are compositionally biased toward low complexity. Polar residues predominate over residues 360–373 (APSNAQPQHCSPVQ). The span at 381-395 (VSPNQAQSAQQSVVV) shows a compositional bias: low complexity. Residues T607 and T612 each carry the phosphothreonine modification. A Phosphoserine modification is found at S614. A disordered region spans residues 650–690 (KSPSDPTHASAPAPPLLIPAASTRSSSTSLASSTPSLENKP). Residues 667-686 (IPAASTRSSSTSLASSTPSL) show a composition bias toward low complexity. Residues K689 and K730 each participate in a glycyl lysine isopeptide (Lys-Gly) (interchain with G-Cter in SUMO2) cross-link. The HD1 signature appears at 689–718 (KPPQAIVKPQILTHVIEGFVIQEGLEPFPV). S759 and S760 each carry phosphoserine. The FCS-type zinc-finger motif lies at 774-808 (EEMDSELLKCEFCGKMGYPNEFLRSKRFCTMSCAK). Zn(2+) is bound by residues C783, C786, C802, and C806. K808 participates in a covalent cross-link: Glycyl lysine isopeptide (Lys-Gly) (interchain with G-Cter in SUMO2). Disordered regions lie at residues 825-844 (RKPD…GPEG) and 863-888 (EDVA…ERER). The region spanning 917-981 (WTVDDVWAFI…CARINSLKDS (65 aa)) is the SAM domain.

Component of a PRC1-like complex. Ubiquitous expression.

The protein resides in the nucleus. Component of a Polycomb group (PcG) multiprotein PRC1-like complex, a complex class required to maintain the transcriptionally repressive state of many genes, including Hox genes, throughout development. PcG PRC1 complex acts via chromatin remodeling and modification of histones; it mediates monoubiquitination of histone H2A 'Lys-119', rendering chromatin heritably changed in its expressibility. The sequence is that of Polyhomeotic-like protein 3 (Phc3) from Mus musculus (Mouse).